The primary structure comprises 102 residues: Small ribosomal subunit protein uS10 (102 aa).

The protein belongs to the universal ribosomal protein uS10 family. As to quaternary structure, part of the 30S ribosomal subunit.

Involved in the binding of tRNA to the ribosomes. The chain is Small ribosomal subunit protein uS10 from Beijerinckia indica subsp. indica (strain ATCC 9039 / DSM 1715 / NCIMB 8712).